Consider the following 122-residue polypeptide: Neuropeptide B (122 aa).

Positions 1-24 (MAGPAMLVAAALALCLLLASPGLA) are cleaved as a signal peptide. W25 carries the 6'-bromotryptophan modification. The propeptide occupies 56–122 (SEPRGGTRSL…LSLSASDCRK (67 aa)).

It belongs to the neuropeptide B/W family.

Its subcellular location is the secreted. Functionally, may be involved in the regulation of feeding, neuroendocrine system, memory, learning and in the afferent pain pathway. This is Neuropeptide B (NPB) from Bos taurus (Bovine).